A 332-amino-acid polypeptide reads, in one-letter code: GDP-mannose transporter 2 (332 aa).

The Cytoplasmic portion of the chain corresponds to 1–12 (MSSLKVSQQDKK). Residues 13–33 (WVNSGSVAILAYCASSILMTI) form a helical membrane-spanning segment. At 34 to 47 (TNKVVMSDRTFNMN) the chain is on the lumenal side. Residues 48 to 68 (FLLLFIQSLVCVITLLVLKVL) traverse the membrane as a helical segment. At 69 to 84 (GSVNFRSFNKTDARNW) the chain is on the cytoplasmic side. Residues 85 to 105 (FPISICLVLMIFTSSKSLQYL) traverse the membrane as a helical segment. At 106 to 108 (SVP) the chain is on the lumenal side. The helical transmembrane segment at 109–129 (VYTIFKNLTIIVIAYGEVLFF) threads the bilayer. At 130-131 (GS) the chain is on the cytoplasmic side. Residues 132–152 (SVGNMELGSFALMIVSSLIAA) traverse the membrane as a helical segment. Topologically, residues 153-174 (HGDYLHSVERLKKMLGPNVSFS) are lumenal. A glycan (N-linked (GlcNAc...) asparagine) is linked at Asn170. A helical transmembrane segment spans residues 175–195 (FIVNIGYFWIAANCFASALFV). Residues 196 to 211 (LLMRKRIQVTNFKDFD) are Cytoplasmic-facing. A helical membrane pass occupies residues 212–232 (TMFYNNVLSLPLLLLGSYLFE). Residues 233–248 (DWSQENLLPHVDIDNL) lie on the Lumenal side of the membrane. Asn247 carries an N-linked (GlcNAc...) asparagine glycan. The helical transmembrane segment at 249–269 (STMIISGLASVAISYCSGWCV) threads the bilayer. Topologically, residues 270-274 (RVTSS) are cytoplasmic. A helical transmembrane segment spans residues 275 to 295 (TTYSMVGALNKLPIALTGFLF). The Lumenal portion of the chain corresponds to 296–300 (NDAAR). The chain crosses the membrane as a helical span at residues 301–321 (NLSSAASILLGFASGIIYAVA). The Cytoplasmic portion of the chain corresponds to 322–332 (KQKKLQNSEKI).

Belongs to the TPT transporter family. SLC35D subfamily. As to quaternary structure, homooligomer.

The protein localises to the golgi apparatus membrane. The protein resides in the cytoplasmic vesicle membrane. It is found in the endoplasmic reticulum membrane. Its function is as follows. Involved in the import of GDP-mannose from the cytoplasm into the Golgi lumen. This Vanderwaltozyma polyspora (strain ATCC 22028 / DSM 70294 / BCRC 21397 / CBS 2163 / NBRC 10782 / NRRL Y-8283 / UCD 57-17) (Kluyveromyces polysporus) protein is GDP-mannose transporter 2 (VRG4-2).